The chain runs to 361 residues: tRNA 2-selenouridine synthase (361 aa).

One can recognise a Rhodanese domain in the interval 11–134 (ALLERPLIDV…MRQCVNAEIE (124 aa)). The S-selanylcysteine intermediate role is filled by Cys94.

The protein belongs to the SelU family. In terms of assembly, monomer.

It catalyses the reaction 5-methylaminomethyl-2-thiouridine(34) in tRNA + selenophosphate + (2E)-geranyl diphosphate + H2O + H(+) = 5-methylaminomethyl-2-selenouridine(34) in tRNA + (2E)-thiogeraniol + phosphate + diphosphate. It carries out the reaction 5-methylaminomethyl-2-thiouridine(34) in tRNA + (2E)-geranyl diphosphate = 5-methylaminomethyl-S-(2E)-geranyl-thiouridine(34) in tRNA + diphosphate. The enzyme catalyses 5-methylaminomethyl-S-(2E)-geranyl-thiouridine(34) in tRNA + selenophosphate + H(+) = 5-methylaminomethyl-2-(Se-phospho)selenouridine(34) in tRNA + (2E)-thiogeraniol. The catalysed reaction is 5-methylaminomethyl-2-(Se-phospho)selenouridine(34) in tRNA + H2O = 5-methylaminomethyl-2-selenouridine(34) in tRNA + phosphate. Functionally, involved in the post-transcriptional modification of the uridine at the wobble position (U34) of tRNA(Lys), tRNA(Glu) and tRNA(Gln). Catalyzes the conversion of 2-thiouridine (S2U-RNA) to 2-selenouridine (Se2U-RNA). Acts in a two-step process involving geranylation of 2-thiouridine (S2U) to S-geranyl-2-thiouridine (geS2U) and subsequent selenation of the latter derivative to 2-selenouridine (Se2U) in the tRNA chain. This chain is tRNA 2-selenouridine synthase, found in Chromohalobacter salexigens (strain ATCC BAA-138 / DSM 3043 / CIP 106854 / NCIMB 13768 / 1H11).